A 385-amino-acid polypeptide reads, in one-letter code: Multidrug export protein AcrE (385 aa).

Residues 1–23 (MTKHARFFLLPSFILISAALIAG) form the signal peptide. Cys24 carries the N-palmitoyl cysteine lipid modification. Cys24 is lipidated: S-diacylglycerol cysteine. The disordered stretch occupies residues 366-385 (ARPGEQVKATTDTPADTASK). Positions 373–385 (KATTDTPADTASK) are enriched in polar residues.

It belongs to the membrane fusion protein (MFP) (TC 8.A.1) family. In terms of assembly, part of the tripartite efflux system AcrEF-TolC, which is composed of an inner membrane transporter, AcrF, a periplasmic membrane fusion protein, AcrE, and an outer membrane component, TolC. The complex forms a large protein conduit and can translocate molecules across both the inner and outer membranes.

The protein resides in the cell inner membrane. In terms of biological role, part of the tripartite efflux system AcrEF-TolC. Involved in the efflux of indole and organic solvents. The protein is Multidrug export protein AcrE (acrE) of Escherichia coli (strain K12).